Consider the following 421-residue polypeptide: Adenosylhomocysteinase (421 aa).

Aspartate 128 and glutamate 153 together coordinate substrate. 154 to 156 (TTT) is an NAD(+) binding site. Residues lysine 183 and aspartate 187 each contribute to the substrate site. NAD(+)-binding positions include asparagine 188, 217 to 222 (GYGWCG), glutamate 240, 296 to 298 (AGH), and asparagine 343.

It belongs to the adenosylhomocysteinase family. Requires NAD(+) as cofactor.

It is found in the cytoplasm. The enzyme catalyses S-adenosyl-L-homocysteine + H2O = L-homocysteine + adenosine. It functions in the pathway amino-acid biosynthesis; L-homocysteine biosynthesis; L-homocysteine from S-adenosyl-L-homocysteine: step 1/1. In terms of biological role, may play a key role in the regulation of the intracellular concentration of adenosylhomocysteine. This chain is Adenosylhomocysteinase, found in Thermococcus kodakarensis (strain ATCC BAA-918 / JCM 12380 / KOD1) (Pyrococcus kodakaraensis (strain KOD1)).